The chain runs to 419 residues: Histidine--tRNA ligase (419 aa).

It belongs to the class-II aminoacyl-tRNA synthetase family. As to quaternary structure, homodimer.

The protein localises to the cytoplasm. It catalyses the reaction tRNA(His) + L-histidine + ATP = L-histidyl-tRNA(His) + AMP + diphosphate + H(+). This is Histidine--tRNA ligase from Thiobacillus denitrificans (strain ATCC 25259 / T1).